The chain runs to 362 residues: Histidinol-phosphate aminotransferase 1 (362 aa).

Position 226 is an N6-(pyridoxal phosphate)lysine (Lys-226).

It belongs to the class-II pyridoxal-phosphate-dependent aminotransferase family. Histidinol-phosphate aminotransferase subfamily. As to quaternary structure, homodimer. The cofactor is pyridoxal 5'-phosphate.

The catalysed reaction is L-histidinol phosphate + 2-oxoglutarate = 3-(imidazol-4-yl)-2-oxopropyl phosphate + L-glutamate. The protein operates within amino-acid biosynthesis; L-histidine biosynthesis; L-histidine from 5-phospho-alpha-D-ribose 1-diphosphate: step 7/9. This Dechloromonas aromatica (strain RCB) protein is Histidinol-phosphate aminotransferase 1.